Reading from the N-terminus, the 480-residue chain is tRNA-2-methylthio-N(6)-dimethylallyladenosine synthase (480 aa).

The MTTase N-terminal domain occupies 25-145; that stretch reads GVFYVHTLGC…LPQLLDQARI (121 aa). Cys34, Cys74, Cys108, Cys182, Cys186, and Cys189 together coordinate [4Fe-4S] cluster. One can recognise a Radical SAM core domain in the interval 168 to 397; sequence RASKVSSWVA…VALQERITEE (230 aa). The region spanning 400–470 is the TRAM domain; that stretch reads KTFEGRDVEV…RHNLIADPNP (71 aa).

The protein belongs to the methylthiotransferase family. MiaB subfamily. Monomer. The cofactor is [4Fe-4S] cluster.

The protein localises to the cytoplasm. It carries out the reaction N(6)-dimethylallyladenosine(37) in tRNA + (sulfur carrier)-SH + AH2 + 2 S-adenosyl-L-methionine = 2-methylsulfanyl-N(6)-dimethylallyladenosine(37) in tRNA + (sulfur carrier)-H + 5'-deoxyadenosine + L-methionine + A + S-adenosyl-L-homocysteine + 2 H(+). Catalyzes the methylthiolation of N6-(dimethylallyl)adenosine (i(6)A), leading to the formation of 2-methylthio-N6-(dimethylallyl)adenosine (ms(2)i(6)A) at position 37 in tRNAs that read codons beginning with uridine. This chain is tRNA-2-methylthio-N(6)-dimethylallyladenosine synthase, found in Bifidobacterium adolescentis (strain ATCC 15703 / DSM 20083 / NCTC 11814 / E194a).